Reading from the N-terminus, the 115-residue chain is NAD(P)H-quinone oxidoreductase subunit M (115 aa).

Belongs to the complex I NdhM subunit family. As to quaternary structure, NDH-1 can be composed of about 15 different subunits; different subcomplexes with different compositions have been identified which probably have different functions.

The protein localises to the cellular thylakoid membrane. It catalyses the reaction a plastoquinone + NADH + (n+1) H(+)(in) = a plastoquinol + NAD(+) + n H(+)(out). The enzyme catalyses a plastoquinone + NADPH + (n+1) H(+)(in) = a plastoquinol + NADP(+) + n H(+)(out). NDH-1 shuttles electrons from an unknown electron donor, via FMN and iron-sulfur (Fe-S) centers, to quinones in the respiratory and/or the photosynthetic chain. The immediate electron acceptor for the enzyme in this species is believed to be plastoquinone. Couples the redox reaction to proton translocation, and thus conserves the redox energy in a proton gradient. Cyanobacterial NDH-1 also plays a role in inorganic carbon-concentration. This is NAD(P)H-quinone oxidoreductase subunit M from Prochlorococcus marinus (strain MIT 9312).